We begin with the raw amino-acid sequence, 87 residues long: Large ribosomal subunit protein bL27 (87 aa).

A disordered region spans residues 1-25 (MAHKKGASSSRNGRDSNAQRLGVKR). A compositionally biased stretch (polar residues) spans 7-19 (ASSSRNGRDSNAQ).

The protein belongs to the bacterial ribosomal protein bL27 family.

The sequence is that of Large ribosomal subunit protein bL27 from Rhodococcus jostii (strain RHA1).